A 285-amino-acid chain; its full sequence is Pantothenate synthetase (285 aa).

30–37 (MGFLHEGH) provides a ligand contact to ATP. The active-site Proton donor is H37. Q61 contacts (R)-pantoate. Q61 is a binding site for beta-alanine. 147–150 (GQKD) is a binding site for ATP. Q153 serves as a coordination point for (R)-pantoate. Residues V176 and 184–187 (KSSR) each bind ATP.

This sequence belongs to the pantothenate synthetase family. Homodimer.

It localises to the cytoplasm. The catalysed reaction is (R)-pantoate + beta-alanine + ATP = (R)-pantothenate + AMP + diphosphate + H(+). It participates in cofactor biosynthesis; (R)-pantothenate biosynthesis; (R)-pantothenate from (R)-pantoate and beta-alanine: step 1/1. Its function is as follows. Catalyzes the condensation of pantoate with beta-alanine in an ATP-dependent reaction via a pantoyl-adenylate intermediate. The sequence is that of Pantothenate synthetase from Listeria monocytogenes serotype 4b (strain F2365).